We begin with the raw amino-acid sequence, 2596 residues long: Cadherin EGF LAG seven-pass G-type receptor fmi-1 (2596 aa).

The first 22 residues, 1–22, serve as a signal peptide directing secretion; that stretch reads MMLDRIMFLLFFILSLVIGSFS. The Extracellular portion of the chain corresponds to 23 to 2229; the sequence is EYLDDKYYST…IVRVAQMDNM (2207 aa). 8 Cadherin domains span residues 166 to 270, 271 to 375, 376 to 479, 480 to 581, 582 to 682, 683 to 784, 785 to 892, and 893 to 1000; these read QQEK…SPIF, EKDS…APVF, ASDS…APTL, IAAQ…APTF, DKKE…APYF, NDHP…SPQF, TSSS…APTF, and EQLS…KPAL. N-linked (GlcNAc...) asparagine glycosylation is found at Asn381, Asn387, Asn562, Asn587, Asn765, and Asn824. Asn1030 and Asn1263 each carry an N-linked (GlcNAc...) asparagine glycan. One can recognise an EGF-like 1 domain in the interval 1251–1287; it reads RIDECYRGRCSNNSTCVAFENTYQCECKPGWIGRHCE. 12 disulfide bridges follow: Cys1255–Cys1266, Cys1260–Cys1275, Cys1277–Cys1286, Cys1497–Cys1526, Cys1533–Cys1546, Cys1540–Cys1555, Cys1557–Cys1567, Cys1709–Cys1732, Cys1738–Cys1750, Cys1744–Cys1759, Cys1761–Cys1770, and Cys1780–Cys1785. In terms of domain architecture, Laminin G-like 1 spans 1333–1526; sequence SVSFDGEGLL…HKVGQVHEGC (194 aa). The 40-residue stretch at 1529–1568 folds into the EGF-like 2 domain; sequence RKDFCSTSDGQCSATSKCVNRWGGRICSCPQSVHSTGECV. A Laminin G-like 2 domain is found at 1577–1732; the sequence is RGHSLFEEES…KKKGKTRAGC (156 aa). EGF-like domains are found at residues 1734–1771 and 1776–1808; these read VPNR…DTCL and VANV…KNCQ. Asn1789 carries N-linked (GlcNAc...) asparagine glycosylation. A disulfide bond links Cys1798 and Cys1807. Asn1965, Asn1992, Asn2152, Asn2195, and Asn2228 each carry an N-linked (GlcNAc...) asparagine glycan. In terms of domain architecture, GAIN-B spans 2054–2219; it reads EYSTLISKLW…TMFVNDQSSS (166 aa). Cys2174 and Cys2201 are oxidised to a cystine. The segment at 2174–2219 is GPS; it reads CVRFDEKSGTWTARGAALIGLNLTHAACEYNRIGVFTMFVNDQSSS. A helical transmembrane segment spans residues 2230–2250; the sequence is TSPAIAGVALFLCFLSILLTL. Topologically, residues 2251–2261 are cytoplasmic; that stretch reads SRRSLKTHSVR. A helical transmembrane segment spans residues 2262–2282; it reads IGFILFFAINILNLFFVHKTA. The Extracellular portion of the chain corresponds to 2283–2292; sequence INQAYCPVRN. A helical membrane pass occupies residues 2293–2313; it reads AMLSFTSSAPFAWLFLYGLYI. The Cytoplasmic portion of the chain corresponds to 2314–2326; that stretch reads YRMLADGSSSPSL. The chain crosses the membrane as a helical span at residues 2327-2347; sequence TTSLLVGIVFPCLISFTTFFV. The Extracellular segment spans residues 2348–2356; sequence TDQCSLSPH. Residues 2357–2377 traverse the membrane as a helical segment; that stretch reads LWLFWCIILPIGLFLLLSFYA. Residues 2378–2401 are Cytoplasmic-facing; that stretch reads AATSVLVSLHKKYDVFVAKYNVKR. Residues 2402 to 2422 traverse the membrane as a helical segment; that stretch reads AVFQHFILTIFTLGMTLTGLF. The Extracellular portion of the chain corresponds to 2423–2437; that stretch reads ANQLPLPMEIMEISQ. Residues 2438–2458 form a helical membrane-spanning segment; sequence SIIYLIAALVIFLWCVCDITT. The Cytoplasmic portion of the chain corresponds to 2459 to 2596; sequence KASDSNPSMW…KNTTSTFNRE (138 aa).

Belongs to the G-protein coupled receptor 2 family. LN-TM7 subfamily. In terms of tissue distribution, expressed in a region of neuropil around the nerve ring and the ventral cord (at protein level). Expressed in the head, tail, ventral cord, nerve ring and neurons including HSN neurons. Expressed in DA, VA, and VB and weakly in the DB cholinergic neurons. Not expressed in ventral D-type GABAergic motorneurons.

The protein resides in the cell membrane. It localises to the cell projection. It is found in the axon. Its subcellular location is the dendrite. During ventral cord development, required for axon fasciculation and navigation, mediating both pioneer and follower axon extension, guidance and track formation. Acts in CEPsh glia and SubL neurons to guide follower axons into the nerve ring. Promotes motorneuron development by positively regulating the extension of the anterior neurite of ventral D-type GABAergic motorneurons along the anterior-posterior axis of the ventral nerve cord. Plays a role in synaptogenesis by regulating synaptic vesicle accumulation at GABAergic and cholinergic neuromuscular junctions. This Caenorhabditis elegans protein is Cadherin EGF LAG seven-pass G-type receptor fmi-1.